The chain runs to 242 residues: Small ribosomal subunit protein uS2 (242 aa).

This sequence belongs to the universal ribosomal protein uS2 family.

The protein is Small ribosomal subunit protein uS2 of Colwellia psychrerythraea (strain 34H / ATCC BAA-681) (Vibrio psychroerythus).